Reading from the N-terminus, the 349-residue chain is Protein-glutamate methylesterase/protein-glutamine glutaminase (349 aa).

One can recognise a Response regulatory domain in the interval 5–122 (RVLSVDDSAL…REGMLAYSEM (118 aa)). 4-aspartylphosphate is present on D56. The 193-residue stretch at 152 to 344 (LLSSEKLIAI…QQMLAKISAG (193 aa)) folds into the CheB-type methylesterase domain. Residues S164, H190, and D286 contribute to the active site.

The protein belongs to the CheB family. Post-translationally, phosphorylated by CheA. Phosphorylation of the N-terminal regulatory domain activates the methylesterase activity.

The protein localises to the cytoplasm. It carries out the reaction [protein]-L-glutamate 5-O-methyl ester + H2O = L-glutamyl-[protein] + methanol + H(+). The enzyme catalyses L-glutaminyl-[protein] + H2O = L-glutamyl-[protein] + NH4(+). Its function is as follows. Involved in chemotaxis. Part of a chemotaxis signal transduction system that modulates chemotaxis in response to various stimuli. Catalyzes the demethylation of specific methylglutamate residues introduced into the chemoreceptors (methyl-accepting chemotaxis proteins or MCP) by CheR. Also mediates the irreversible deamidation of specific glutamine residues to glutamic acid. The polypeptide is Protein-glutamate methylesterase/protein-glutamine glutaminase (Salmonella choleraesuis (strain SC-B67)).